The following is a 65-amino-acid chain: MAEDKKKAPKDSFFKGVISEMEKTSWPTKEEILKYTTIVIVTVVFFLIFFYALDLGIGKLIELIS.

Residues 38-58 (IVIVTVVFFLIFFYALDLGIG) form a helical membrane-spanning segment.

This sequence belongs to the SecE/SEC61-gamma family. In terms of assembly, component of the Sec protein translocase complex. Heterotrimer consisting of SecY, SecE and SecG subunits. The heterotrimers can form oligomers, although 1 heterotrimer is thought to be able to translocate proteins. Interacts with the ribosome. Interacts with SecDF, and other proteins may be involved. Interacts with SecA.

The protein resides in the cell membrane. Its function is as follows. Essential subunit of the Sec protein translocation channel SecYEG. Clamps together the 2 halves of SecY. May contact the channel plug during translocation. This Staphylococcus carnosus (strain TM300) protein is Protein translocase subunit SecE.